We begin with the raw amino-acid sequence, 114 residues long: Large ribosomal subunit protein uL22 (114 aa).

Belongs to the universal ribosomal protein uL22 family. As to quaternary structure, part of the 50S ribosomal subunit.

Functionally, this protein binds specifically to 23S rRNA; its binding is stimulated by other ribosomal proteins, e.g. L4, L17, and L20. It is important during the early stages of 50S assembly. It makes multiple contacts with different domains of the 23S rRNA in the assembled 50S subunit and ribosome. In terms of biological role, the globular domain of the protein is located near the polypeptide exit tunnel on the outside of the subunit, while an extended beta-hairpin is found that lines the wall of the exit tunnel in the center of the 70S ribosome. This Streptococcus suis (strain 98HAH33) protein is Large ribosomal subunit protein uL22.